A 354-amino-acid polypeptide reads, in one-letter code: Carbamoyl phosphate synthase arginine-specific small chain (354 aa).

The segment at 1–163 is CPSase; it reads MKAYLHVASG…RTIETYGEGG (163 aa). L-glutamine-binding residues include Ser-46, Gly-213, and Gly-215. The Glutamine amidotransferase type-1 domain maps to 165-352; it reads HLVLVDFGYK…LQTVFKGENV (188 aa). The Nucleophile role is filled by Cys-240. L-glutamine contacts are provided by Leu-241, Gln-244, Asn-282, and Tyr-285. Active-site residues include His-325 and Glu-327.

This sequence belongs to the CarA family. In terms of assembly, composed of two chains; the small (or glutamine) chain promotes the hydrolysis of glutamine to ammonia, which is used by the large (or ammonia) chain to synthesize carbamoyl phosphate. Tetramer of heterodimers (alpha,beta)4.

The enzyme catalyses hydrogencarbonate + L-glutamine + 2 ATP + H2O = carbamoyl phosphate + L-glutamate + 2 ADP + phosphate + 2 H(+). It catalyses the reaction L-glutamine + H2O = L-glutamate + NH4(+). It functions in the pathway amino-acid biosynthesis; L-arginine biosynthesis; carbamoyl phosphate from bicarbonate: step 1/1. In terms of biological role, small subunit of the glutamine-dependent carbamoyl phosphate synthetase (CPSase). CPSase catalyzes the formation of carbamoyl phosphate from the ammonia moiety of glutamine, carbonate, and phosphate donated by ATP, constituting the first step of the biosynthetic pathway leading to arginine and/or urea. The small subunit (glutamine amidotransferase) binds and cleaves glutamine to supply the large subunit with the substrate ammonia. The protein is Carbamoyl phosphate synthase arginine-specific small chain of Geobacillus stearothermophilus (Bacillus stearothermophilus).